Reading from the N-terminus, the 499-residue chain is Cytochrome P450 71A27 (499 aa).

The helical transmembrane segment at 3-23 threads the bilayer; it reads MILISLCLTTLLAFLFLKPLL. Cys438 is a binding site for heme.

It belongs to the cytochrome P450 family. Heme is required as a cofactor.

It is found in the membrane. In Arabidopsis thaliana (Mouse-ear cress), this protein is Cytochrome P450 71A27 (CYP71A27).